A 930-amino-acid polypeptide reads, in one-letter code: Translation initiation factor IF-2 (930 aa).

Residues 50–67 (FKPAAAPKVEAKPAAPKV) show a composition bias toward low complexity. 2 disordered regions span residues 50–195 (FKPA…PRID) and 260–346 (EVVP…HELP). Composition is skewed to basic and acidic residues over residues 68 to 90 (SAEK…EAKP) and 110 to 125 (FKAE…AERR). Positions 129 to 141 (KGNNRDQQQNGNR) are enriched in low complexity. Basic and acidic residues-rich tracts occupy residues 157–167 (RDNRRFNDQAK) and 262–295 (VPEK…DGPR). The span at 309-318 (NQKNSNWNNN) shows a compositional bias: low complexity. Residues 337–346 (VTERKFHELP) show a composition bias toward basic and acidic residues. Residues 432-599 (ERPPVVTIMG…TVLLVAEIQE (168 aa)) enclose the tr-type G domain. A G1 region spans residues 441–448 (GHVDHGKT). 441-448 (GHVDHGKT) is a GTP binding site. The tract at residues 466–470 (GITQH) is G2. A G3 region spans residues 487 to 490 (DTPG). Residues 487 to 491 (DTPGH) and 541 to 544 (NKID) each bind GTP. The tract at residues 541–544 (NKID) is G4. Residues 577-579 (SAK) form a G5 region.

The protein belongs to the TRAFAC class translation factor GTPase superfamily. Classic translation factor GTPase family. IF-2 subfamily.

The protein localises to the cytoplasm. One of the essential components for the initiation of protein synthesis. Protects formylmethionyl-tRNA from spontaneous hydrolysis and promotes its binding to the 30S ribosomal subunits. Also involved in the hydrolysis of GTP during the formation of the 70S ribosomal complex. The sequence is that of Translation initiation factor IF-2 from Streptococcus pneumoniae (strain Hungary19A-6).